We begin with the raw amino-acid sequence, 339 residues long: UDP-N-acetylenolpyruvoylglucosamine reductase (339 aa).

Residues 18-189 form the FAD-binding PCMH-type domain; the sequence is GIDVKARYFS…LRVRFALTRT (172 aa). Arginine 166 is a catalytic residue. Residue serine 239 is the Proton donor of the active site. The active site involves glutamate 335.

It belongs to the MurB family. The cofactor is FAD.

Its subcellular location is the cytoplasm. It catalyses the reaction UDP-N-acetyl-alpha-D-muramate + NADP(+) = UDP-N-acetyl-3-O-(1-carboxyvinyl)-alpha-D-glucosamine + NADPH + H(+). The protein operates within cell wall biogenesis; peptidoglycan biosynthesis. In terms of biological role, cell wall formation. This chain is UDP-N-acetylenolpyruvoylglucosamine reductase, found in Pseudomonas putida (strain ATCC 47054 / DSM 6125 / CFBP 8728 / NCIMB 11950 / KT2440).